The chain runs to 320 residues: ATP-dependent 6-phosphofructokinase (320 aa).

Position 12 (Gly-12) interacts with ATP. 22–26 serves as a coordination point for ADP; that stretch reads RAVVR. Residues 73 to 74 and 103 to 106 contribute to the ATP site; these read RF and GDGS. Position 104 (Asp-104) interacts with Mg(2+). Substrate is bound at residue 126 to 128; that stretch reads TID. The Proton acceptor role is filled by Asp-128. Residue Arg-155 coordinates ADP. Substrate is bound by residues Arg-163 and 170–172; that span reads MGR. Residues 186–188 and 214–216 each bind ADP; these read GAE and KNH. Substrate contacts are provided by residues Glu-223, Arg-244, and 250 to 253; that span reads HIQR.

This sequence belongs to the phosphofructokinase type A (PFKA) family. ATP-dependent PFK group I subfamily. Prokaryotic clade 'B1' sub-subfamily. As to quaternary structure, homotetramer. Mg(2+) is required as a cofactor.

Its subcellular location is the cytoplasm. The enzyme catalyses beta-D-fructose 6-phosphate + ATP = beta-D-fructose 1,6-bisphosphate + ADP + H(+). It participates in carbohydrate degradation; glycolysis; D-glyceraldehyde 3-phosphate and glycerone phosphate from D-glucose: step 3/4. Allosterically activated by ADP and other diphosphonucleosides, and allosterically inhibited by phosphoenolpyruvate. Its function is as follows. Catalyzes the phosphorylation of D-fructose 6-phosphate to fructose 1,6-bisphosphate by ATP, the first committing step of glycolysis. This is ATP-dependent 6-phosphofructokinase from Teredinibacter turnerae (strain ATCC 39867 / T7901).